A 213-amino-acid chain; its full sequence is Orotate phosphoribosyltransferase (213 aa).

Lys-26 serves as a coordination point for 5-phospho-alpha-D-ribose 1-diphosphate. An orotate-binding site is contributed by 34–35 (FF). Residues 72–73 (YK), Arg-99, Lys-100, Lys-103, His-105, and 124–132 (DDVITAGTA) each bind 5-phospho-alpha-D-ribose 1-diphosphate. 2 residues coordinate orotate: Thr-128 and Arg-156.

This sequence belongs to the purine/pyrimidine phosphoribosyltransferase family. PyrE subfamily. As to quaternary structure, homodimer. Mg(2+) serves as cofactor.

It carries out the reaction orotidine 5'-phosphate + diphosphate = orotate + 5-phospho-alpha-D-ribose 1-diphosphate. Its pathway is pyrimidine metabolism; UMP biosynthesis via de novo pathway; UMP from orotate: step 1/2. Its function is as follows. Catalyzes the transfer of a ribosyl phosphate group from 5-phosphoribose 1-diphosphate to orotate, leading to the formation of orotidine monophosphate (OMP). This Pseudomonas savastanoi pv. phaseolicola (strain 1448A / Race 6) (Pseudomonas syringae pv. phaseolicola (strain 1448A / Race 6)) protein is Orotate phosphoribosyltransferase.